The chain runs to 307 residues: Dihydroorotate dehydrogenase A (fumarate) (307 aa).

Residues Ser-21 and 46–47 (KT) contribute to the FMN site. Substrate-binding positions include Lys-46, 70-74 (NSVGL), and Asn-130. Position 130 (Asn-130) interacts with FMN. Cys-133 serves as the catalytic Nucleophile. FMN is bound by residues Lys-168 and Ile-194. Substrate is bound at residue 195-196 (NT). FMN contacts are provided by residues Gly-220, 246–247 (GG), and 268–269 (GS).

This sequence belongs to the dihydroorotate dehydrogenase family. Type 1 subfamily. As to quaternary structure, homodimer. Requires FMN as cofactor.

The protein localises to the cytoplasm. The catalysed reaction is (S)-dihydroorotate + fumarate = orotate + succinate. The protein operates within pyrimidine metabolism; UMP biosynthesis via de novo pathway. In terms of biological role, catalyzes the conversion of dihydroorotate to orotate with fumarate as the electron acceptor. This is Dihydroorotate dehydrogenase A (fumarate) (pyrD) from Lactobacillus delbrueckii subsp. bulgaricus (strain ATCC BAA-365 / Lb-18).